The sequence spans 965 residues: Aminopeptidase N (965 aa).

Over 1 to 8 (MAKGFYIS) the chain is Cytoplasmic. A helical; Signal-anchor for type II membrane protein membrane pass occupies residues 9-32 (KALGILAILLGVAAVATIIALSVV). Residues 33-65 (YAQEKNKNAERGTAAPTSPTGPTTTSATTLDQS) are cytosolic Ser/Thr-rich junction. Topologically, residues 33–965 (YAQEKNKNAE…VVLNWFKDHS (933 aa)) are extracellular. The disordered stretch occupies residues 40 to 65 (NAERGTAAPTSPTGPTTTSATTLDQS). Residues 44–61 (GTAAPTSPTGPTTTSATT) show a composition bias toward low complexity. A metalloprotease region spans residues 66-965 (KPWNRYRLPT…VVLNWFKDHS (900 aa)). Asn125 is a glycosylation site (N-linked (GlcNAc...) asparagine). Residue Tyr173 is modified to Sulfotyrosine. N-linked (GlcNAc...) asparagine glycans are attached at residues Asn231, Asn260, and Asn316. 349 to 353 (GAMEN) serves as a coordination point for substrate. His385 lines the Zn(2+) pocket. Glu386 (proton acceptor) is an active-site residue. Residues His389 and Glu408 each contribute to the Zn(2+) site. Tyr416 is subject to Sulfotyrosine. Asn508, Asn569, Asn624, Asn680, Asn734, and Asn738 each carry an N-linked (GlcNAc...) asparagine glycan. 2 disulfides stabilise this stretch: Cys760–Cys767 and Cys797–Cys833.

It belongs to the peptidase M1 family. In terms of assembly, homodimer. Interacts with SLC6A19. The cofactor is Zn(2+). In terms of processing, sulfated. Post-translationally, N- and O-glycosylated. May undergo proteolysis and give rise to a soluble form.

It is found in the cell membrane. It carries out the reaction Release of an N-terminal amino acid, Xaa-|-Yaa- from a peptide, amide or arylamide. Xaa is preferably Ala, but may be most amino acids including Pro (slow action). When a terminal hydrophobic residue is followed by a prolyl residue, the two may be released as an intact Xaa-Pro dipeptide.. In terms of biological role, broad specificity aminopeptidase which plays a role in the final digestion of peptides generated from hydrolysis of proteins by gastric and pancreatic proteases. Also involved in the processing of various peptides including peptide hormones, such as angiotensin III and IV, neuropeptides, and chemokines. May also be involved the cleavage of peptides bound to major histocompatibility complex class II molecules of antigen presenting cells. May have a role in angiogenesis and promote cholesterol crystallization. May have a role in amino acid transport by acting as binding partner of amino acid transporter SLC6A19 and regulating its activity. The sequence is that of Aminopeptidase N (ANPEP) from Bos taurus (Bovine).